The primary structure comprises 223 residues: Ras-related protein RABA4c (223 aa).

A GTP-binding site is contributed by 22–29 (GDSAVGKS). The Effector region signature appears at 44 to 52 (SKATIGVEF). GTP-binding positions include 70-74 (DTAGQ), 128-131 (NKTD), and 158-159 (SA). Residues Cys-219 and Cys-220 are each lipidated (S-geranylgeranyl cysteine).

It belongs to the small GTPase superfamily. Rab family.

It localises to the cell membrane. Its function is as follows. Intracellular vesicle trafficking and protein transport. In Arabidopsis thaliana (Mouse-ear cress), this protein is Ras-related protein RABA4c (RABA4C).